The chain runs to 480 residues: Probable cyclodipeptide synthase PUL1 (480 aa).

The protein operates within siderophore biosynthesis. Its function is as follows. Probable cyclodipeptide synthase; part of the PUL gene cluster that mediates the formation of pulcherrimin, a red iron-containing pigment composed of two cyclized and modified leucine molecules that acts as a siderophore, a chelator that binds iron outside the cell for subsequent uptake. Two leucine molecules are cyclized via a cyclodipeptide synthase, and the resulting diketopiperazine is oxidized by a cytochrome P450 monooxygenase to generate pulcherriminic acid (PA), which can then spontaneously bind iron to form pulcherrimin. The probable cyclodipeptide synthase PUL1 and the cytochrome P450 monooxygenase PUL2 encode the enzymes responsible for the two-step pulcherrimin biosynthesis pathway. The protein is Probable cyclodipeptide synthase PUL1 of Kluyveromyces lactis (strain ATCC 8585 / CBS 2359 / DSM 70799 / NBRC 1267 / NRRL Y-1140 / WM37) (Yeast).